We begin with the raw amino-acid sequence, 338 residues long: Activator of 90 kDa heat shock protein ATPase homolog 1 (338 aa).

Residue Lys3 is modified to N6-acetyllysine. Lys182 participates in a covalent cross-link: Glycyl lysine isopeptide (Lys-Gly) (interchain with G-Cter in SUMO1). Phosphoserine is present on Ser193. A Glycyl lysine isopeptide (Lys-Gly) (interchain with G-Cter in SUMO2) cross-link involves residue Lys203. Position 212 is an N6-acetyllysine (Lys212). Tyr223 carries the phosphotyrosine; by ABL modification.

It belongs to the AHA1 family. In terms of assembly, interacts with HSPCA/HSP90. Interacts with HSP90AA1; the interaction activates HSP90AA1 ATPase activity. Interacts with HSP90AB1. Interacts with GCH1. Interacts with SRPK1. Interacts with FLCN. Post-translationally, phosphorylation at Tyr-223 enhances binding to chaperone HSP90AA1.

The protein localises to the cytoplasm. It is found in the cytosol. It localises to the endoplasmic reticulum. Its function is as follows. Acts as a co-chaperone of HSP90AA1. Activates the ATPase activity of HSP90AA1 leading to increase in its chaperone activity. Competes with the inhibitory co-chaperone FNIP1 for binding to HSP90AA1, thereby providing a reciprocal regulatory mechanism for chaperoning of client proteins. Competes with the inhibitory co-chaperone TSC1 for binding to HSP90AA1, thereby providing a reciprocal regulatory mechanism for chaperoning of client proteins. The polypeptide is Activator of 90 kDa heat shock protein ATPase homolog 1 (Ahsa1) (Mus musculus (Mouse)).